A 252-amino-acid chain; its full sequence is uncharacterized protein (252 aa).

10 tandem repeats follow at residues 68-82 (TYNQ…DLVD), 83-97 (TYNQ…DLVD), 98-112 (TYNQ…DLVD), 113-127 (TYNQ…DLVD), 128-142 (TYNQ…DLVD), 143-157 (TYNQ…DLVD), 158-172 (TYNQ…DLID), 173-187 (TYNQ…DLVD), 188-202 (TYNQ…DLVD), and 203-217 (TYNQ…DLVD). The interval 68–246 (TYNQSQNVCP…LIDTYNQSQN (179 aa)) is 13 X 15 AA tandem repeats. Residues 218–230 (TYNQSQNVCPQDL) form an 11; truncated repeat. The stretch at 231–239 (NVYTQDLID) is one 12; truncated repeat. The 13; truncated repeat unit spans residues 240–246 (TYNQSQN).

A protein probably derived from this gene is found in cuboidal crystalline inclusions, but is not toxic even when coexpressed with upstream ORF1. The protein runs anomalously as a 50 kDa band in gels. This is an uncharacterized protein from Bacillus thuringiensis subsp. kurstaki.